A 194-amino-acid polypeptide reads, in one-letter code: Peptidyl-tRNA hydrolase (194 aa).

A tRNA-binding site is contributed by Tyr21. Residue His26 is the Proton acceptor of the active site. Positions 72, 74, and 120 each coordinate tRNA.

It belongs to the PTH family. Monomer.

It localises to the cytoplasm. It catalyses the reaction an N-acyl-L-alpha-aminoacyl-tRNA + H2O = an N-acyl-L-amino acid + a tRNA + H(+). In terms of biological role, hydrolyzes ribosome-free peptidyl-tRNAs (with 1 or more amino acids incorporated), which drop off the ribosome during protein synthesis, or as a result of ribosome stalling. Its function is as follows. Catalyzes the release of premature peptidyl moieties from peptidyl-tRNA molecules trapped in stalled 50S ribosomal subunits, and thus maintains levels of free tRNAs and 50S ribosomes. This Halorhodospira halophila (strain DSM 244 / SL1) (Ectothiorhodospira halophila (strain DSM 244 / SL1)) protein is Peptidyl-tRNA hydrolase.